A 175-amino-acid chain; its full sequence is Isopentenyl-diphosphate Delta-isomerase (175 aa).

2 residues coordinate Mn(2+): H23 and H30. The region spanning 28–162 (TLHLAFCVFV…PLRYTPWFRR (135 aa)) is the Nudix hydrolase domain. Residue C65 is part of the active site. Residue H67 coordinates Mn(2+). E85 is a Mg(2+) binding site. Mn(2+) is bound by residues E111 and E113. E113 is a catalytic residue.

It belongs to the IPP isomerase type 1 family. The cofactor is Mg(2+). Mn(2+) is required as a cofactor.

Its subcellular location is the cytoplasm. It carries out the reaction isopentenyl diphosphate = dimethylallyl diphosphate. The protein operates within isoprenoid biosynthesis; dimethylallyl diphosphate biosynthesis; dimethylallyl diphosphate from isopentenyl diphosphate: step 1/1. Its function is as follows. Catalyzes the 1,3-allylic rearrangement of the homoallylic substrate isopentenyl (IPP) to its highly electrophilic allylic isomer, dimethylallyl diphosphate (DMAPP). This Halorhodospira halophila (strain DSM 244 / SL1) (Ectothiorhodospira halophila (strain DSM 244 / SL1)) protein is Isopentenyl-diphosphate Delta-isomerase.